Reading from the N-terminus, the 24-residue chain is LFGFLIPLLPHLIGAIPQVIGAIR.

As to quaternary structure, exists as aggregates of 3-4 molecules. In terms of tissue distribution, expressed by the skin glands.

Its subcellular location is the secreted. Thanks to its abundant amphiphilic alpha-helices, it may integrate into membrane phospholipids, leading to lysis of the membrane. Its hemolytic activity is inhibited by phospholipids, but not by cholesterol. Has antibacterial activity with a broad spectrum against various species of bacteria including both Gram-positive and Gram-negative groups. Also has ichthyotoxic activity. This chain is Grammistin Pp 4b, found in Pogonoperca punctata (Clown grouper).